The primary structure comprises 354 residues: Probable calcium-binding protein CML50 (354 aa).

Low complexity-rich tracts occupy residues 1-10 and 28-71; these read MSGYPPTSQG and YSSG…SSYG. Residues 1 to 159 are disordered; the sequence is MSGYPPTSQG…PASSGHGGGY (159 aa). A compositionally biased stretch (pro residues) spans 72-81; the sequence is APPPSAPYAP. Over residues 106-117 the composition is skewed to low complexity; that stretch reads GSSDYGSYGAGP. 2 consecutive EF-hand domains span residues 183–218 and 249–284; these read GTDP…YQQR and YSLQ…LGFS. Asp196, Asp198, Ser200, Glu207, Asp262, Asp264, Ser266, Arg268, and Glu273 together coordinate Ca(2+).

In terms of biological role, potential calcium sensor. In Arabidopsis thaliana (Mouse-ear cress), this protein is Probable calcium-binding protein CML50 (CML50).